The following is a 342-amino-acid chain: Serine/threonine-protein kinase ISR1 (342 aa).

One can recognise a Protein kinase domain in the interval 59-342; the sequence is WRLTRVLGCG…SNARVAEHAF (284 aa). ATP contacts are provided by residues 65–73 and Lys-84; that span reads LGCGSVACV. Asp-190 (proton acceptor) is an active-site residue.

This sequence belongs to the protein kinase superfamily. Ser/Thr protein kinase family.

It carries out the reaction L-seryl-[protein] + ATP = O-phospho-L-seryl-[protein] + ADP + H(+). The enzyme catalyses L-threonyl-[protein] + ATP = O-phospho-L-threonyl-[protein] + ADP + H(+). Functionally, probable serine/threonine protein kinase which may function redundantly with MPK1-independent branch of the PCK1 pathway. This Eremothecium gossypii (strain ATCC 10895 / CBS 109.51 / FGSC 9923 / NRRL Y-1056) (Yeast) protein is Serine/threonine-protein kinase ISR1 (ISR1).